Reading from the N-terminus, the 243-residue chain is Adenosine 5'-phosphosulfate reductase (243 aa).

Belongs to the PAPS reductase family. CysH subfamily. Requires [4Fe-4S] cluster as cofactor.

It is found in the cytoplasm. The enzyme catalyses [thioredoxin]-disulfide + sulfite + AMP + 2 H(+) = adenosine 5'-phosphosulfate + [thioredoxin]-dithiol. Its pathway is sulfur metabolism; hydrogen sulfide biosynthesis; sulfite from sulfate. Its function is as follows. Catalyzes the formation of sulfite from adenosine 5'-phosphosulfate (APS) using thioredoxin as an electron donor. In Staphylococcus haemolyticus (strain JCSC1435), this protein is Adenosine 5'-phosphosulfate reductase.